Consider the following 458-residue polypeptide: MAEIINRNKALAVSPLKASQTMGAALAILGLALSMPLFHGSQGCTAFAKVFFVRHFREPVPLQTTAMDQVSSVMGADENVVEALKTICERQNPSVIGLLTTGLSETQGCDLHTALHEFRTQYEEYKDVPIVPVNTPDFSGCFESGFAAAVKAIVETLVPERRDQVGKRPRQVNVLCSANLTPGDLEYIAESIESFGLRPLLIPDLSGSLDGHLDENRFNALTTGGLSVAELATAGQSVATLVVGQSLAGAADALAERTGVPDRRFGMLYGLDAVDAWLMALAEISGNPVPDRYKRQRAQLQDAMLDTHFMLSSARTAIAADPDLLLGFDALLRSMGAHTVAAVVPARAAALVDSPLPSVRVGDLEDLEHAARAGQAQLVIGNSHALASARRLGVPLLRAGFPQYDLLGGFQRCWSGYRGSSQVLFDLANLLVEHHQGIQPYHSIYAQKPATEQPQWRH.

Cys44 serves as a coordination point for [7Fe-Mo-9S-C-homocitryl] cluster.

It belongs to the NifD/NifK/NifE/NifN family.

The protein operates within cofactor biosynthesis; Fe-Mo cofactor biosynthesis. Its function is as follows. This protein may play a role in the biosynthesis of the prosthetic group of nitrogenase (FeMo cofactor). This chain is Nitrogenase iron-molybdenum cofactor biosynthesis protein NifN (nifN), found in Azotobacter vinelandii.